The sequence spans 543 residues: Organic anion transporter 3 (543 aa).

The Cytoplasmic portion of the chain corresponds to 1 to 21 (MTFAELVDRVGSKGPFQLLHT). A helical membrane pass occupies residues 22-42 (VLLGLPILGMANHNLLQIFTA). At 43 to 124 (PTPAHHCRPP…LVCSSSKLKE (82 aa)) the chain is on the extracellular side. An N-linked (GlcNAc...) asparagine glycan is attached at asparagine 81. Residues 125-145 (MAQSVFMAGILVGGLVLGALS) form a helical membrane-spanning segment. The Cytoplasmic portion of the chain corresponds to 146–151 (DRFGRK). The helical transmembrane segment at 152 to 172 (PILIFSYLLLGASGSGAAFSP) threads the bilayer. At 173–181 (TFSIYAVFR) the chain is on the extracellular side. Residues 182–202 (FLCGFSISGISLSTAILNVEW) form a helical membrane-spanning segment. At 203–212 (VSTRFRAIKS) the chain is on the cytoplasmic side. A helical membrane pass occupies residues 213 to 233 (IAVGFFYTFGQFILPGLAYAI). Residues 234-237 (PQWR) lie on the Extracellular side of the membrane. Residues 238–258 (WLQLTVSVPFLTFFLLSWWLP) traverse the membrane as a helical segment. Over 259–328 (ESIRWMVLSG…FRTPVLRRVT (70 aa)) the chain is Cytoplasmic. The helical transmembrane segment at 329-349 (LCLSLAWFATGFAYYSLAMGV) threads the bilayer. The Extracellular portion of the chain corresponds to 350-355 (EEFGVN). Residues 356-376 (LYVLQLIFGGVDVPAKFITML) form a helical membrane-spanning segment. Over 377–388 (SISYLGRHITEG) the chain is Cytoplasmic. A helical membrane pass occupies residues 389–409 (IVLLLAGGCILALIFVPLDLM). Topologically, residues 410–412 (TLR) are extracellular. The chain crosses the membrane as a helical span at residues 413 to 433 (TVLAVFGKGCLSGSFSCLFLY). Topologically, residues 434 to 472 (TSELYPTVIRQTGMGASNLWARVGSMTAPLVKITGELQP) are cytoplasmic. Residues 473-493 (FIPNIIFGTIALLGGSAALFL) traverse the membrane as a helical segment. Over 494 to 543 (PETLNRPLPETIEDIETWSLRAKEPKPEPEAEKSSQRIPLQPCEPGPGPS) the chain is Extracellular. Residues 513 to 543 (LRAKEPKPEPEAEKSSQRIPLQPCEPGPGPS) are disordered. The segment covering 514–528 (RAKEPKPEPEAEKSS) has biased composition (basic and acidic residues).

It belongs to the major facilitator (TC 2.A.1) superfamily. Organic cation transporter (TC 2.A.1.19) family. Expressed in kidney.

Its subcellular location is the basolateral cell membrane. It catalyses the reaction estrone 3-sulfate(out) + glutarate(in) = estrone 3-sulfate(in) + glutarate(out). The enzyme catalyses estrone 3-sulfate(in) + 2-oxoglutarate(out) = estrone 3-sulfate(out) + 2-oxoglutarate(in). The catalysed reaction is glutarate(in) + 2-oxoglutarate(out) = glutarate(out) + 2-oxoglutarate(in). It carries out the reaction urate(in) + 2-oxoglutarate(out) = urate(out) + 2-oxoglutarate(in). It catalyses the reaction taurocholate(out) + glutarate(in) = taurocholate(in) + glutarate(out). The enzyme catalyses dehydroepiandrosterone 3-sulfate(out) + glutarate(in) = dehydroepiandrosterone 3-sulfate(in) + glutarate(out). The catalysed reaction is prostaglandin F2alpha(out) + glutarate(in) = prostaglandin F2alpha(in) + glutarate(out). It carries out the reaction prostaglandin F2alpha(out) + 2-oxoglutarate(in) = prostaglandin F2alpha(in) + 2-oxoglutarate(out). It catalyses the reaction (R)-carnitine(out) + 2-oxoglutarate(in) = (R)-carnitine(in) + 2-oxoglutarate(out). The enzyme catalyses glutarate(in) + (R)-carnitine(out) = glutarate(out) + (R)-carnitine(in). The catalysed reaction is prostaglandin E2(out) + 2-oxoglutarate(in) = prostaglandin E2(in) + 2-oxoglutarate(out). It carries out the reaction prostaglandin E2(out) + glutarate(in) = prostaglandin E2(in) + glutarate(out). It catalyses the reaction urate(in) + glutarate(out) = urate(out) + glutarate(in). The enzyme catalyses taurocholate(out) + 2-oxoglutarate(in) = taurocholate(in) + 2-oxoglutarate(out). The catalysed reaction is dehydroepiandrosterone 3-sulfate(out) + 2-oxoglutarate(in) = dehydroepiandrosterone 3-sulfate(in) + 2-oxoglutarate(out). It carries out the reaction kynurenate(out) + a dicarboxylate(in) = kynurenate(in) + a dicarboxylate(out). It catalyses the reaction (indol-3-yl)acetate(out) + a dicarboxylate(in) = (indol-3-yl)acetate(in) + a dicarboxylate(out). The enzyme catalyses indoxyl sulfate(out) + a dicarboxylate(in) = indoxyl sulfate(in) + a dicarboxylate(out). The catalysed reaction is N-benzoylglycine(out) + a dicarboxylate(in) = N-benzoylglycine(in) + a dicarboxylate(out). It carries out the reaction 3-carboxy-4-methyl-5-propyl-2-furanpropanoate(out) + a dicarboxylate(in) = 3-carboxy-4-methyl-5-propyl-2-furanpropanoate(in) + a dicarboxylate(out). It catalyses the reaction (6R)-L-erythro-5,6,7,8-tetrahydrobiopterin(out) + a dicarboxylate(in) = (6R)-L-erythro-5,6,7,8-tetrahydrobiopterin(in) + a dicarboxylate(out). The enzyme catalyses L-erythro-7,8-dihydrobiopterin(out) + a dicarboxylate(in) = L-erythro-7,8-dihydrobiopterin(in) + a dicarboxylate(out). The catalysed reaction is L-sepiapterin(out) + a dicarboxylate(in) = L-sepiapterin(in) + a dicarboxylate(out). Functionally, functions as an organic anion/dicarboxylate exchanger that couples organic anion uptake indirectly to the sodium gradient. Transports organic anions such as estrone 3-sulfate (E1S) and urate in exchange for dicarboxylates such as glutarate or ketoglutarate (2-oxoglutarate). Plays an important role in the excretion of endogenous and exogenous organic anions, especially from the kidney and the brain. E1S transport is pH- and chloride-dependent and may also involve E1S/cGMP exchange. Responsible for the transport of prostaglandin E2 (PGE2) and prostaglandin F2(alpha) (PGF2(alpha)) in the basolateral side of the renal tubule. Involved in the transport of neuroactive tryptophan metabolites kynurenate and xanthurenate. Functions as a biopterin transporters involved in the uptake and the secretion of coenzymes tetrahydrobiopterin (BH4), dihydrobiopterin (BH2) and sepiapterin to urine, thereby determining baseline levels of blood biopterins. May be involved in the basolateral transport of steviol, a metabolite of the popular sugar substitute stevioside. May participate in the detoxification/ renal excretion of drugs and xenobiotics, such as the histamine H(2)-receptor antagonists fexofenadine and cimetidine, the antibiotic benzylpenicillin (PCG), the anionic herbicide 2,4-dichloro-phenoxyacetate (2,4-D), the diagnostic agent p-aminohippurate (PAH), the antiviral acyclovir (ACV), and the mycotoxin ochratoxin (OTA), by transporting these exogenous organic anions across the cell membrane in exchange for dicarboxylates such as 2-oxoglutarate. Contributes to the renal uptake of potent uremic toxins (indoxyl sulfate (IS), indole acetate (IA), hippurate/N-benzoylglycine (HA) and 3-carboxy-4-methyl-5-propyl-2-furanpropionate (CMPF)), pravastatin, PCG, E1S and dehydroepiandrosterone sulfate (DHEAS), and is partly involved in the renal uptake of temocaprilat (an angiotensin-converting enzyme (ACE) inhibitor). May contribute to the release of cortisol in the adrenals. Involved in one of the detoxification systems on the choroid plexus (CP), removes substrates such as E1S or taurocholate (TC), PCG, 2,4-D and PAH, from the cerebrospinal fluid (CSF) to the blood for eventual excretion in urine and bile. Also contributes to the uptake of several other organic compounds such as the prostanoids prostaglandin E(2) and prostaglandin F(2-alpha), L-carnitine, and the therapeutic drugs allopurinol, 6-mercaptopurine (6-MP) and 5-fluorouracil (5-FU). Mediates the transport of PAH, PCG, and the statins pravastatin and pitavastatin, from the cerebrum into the blood circulation across the blood-brain barrier (BBB). In summary, plays a role in the efflux of drugs and xenobiotics, helping reduce their undesired toxicological effects on the body. This is Organic anion transporter 3 (SLC22A8) from Sus scrofa (Pig).